Consider the following 268-residue polypeptide: Tryptophan synthase alpha chain (268 aa).

Catalysis depends on proton acceptor residues E49 and D60.

Belongs to the TrpA family. In terms of assembly, tetramer of two alpha and two beta chains.

It carries out the reaction (1S,2R)-1-C-(indol-3-yl)glycerol 3-phosphate + L-serine = D-glyceraldehyde 3-phosphate + L-tryptophan + H2O. The protein operates within amino-acid biosynthesis; L-tryptophan biosynthesis; L-tryptophan from chorismate: step 5/5. The alpha subunit is responsible for the aldol cleavage of indoleglycerol phosphate to indole and glyceraldehyde 3-phosphate. This Escherichia fergusonii (strain ATCC 35469 / DSM 13698 / CCUG 18766 / IAM 14443 / JCM 21226 / LMG 7866 / NBRC 102419 / NCTC 12128 / CDC 0568-73) protein is Tryptophan synthase alpha chain.